A 221-amino-acid polypeptide reads, in one-letter code: Large ribosomal subunit protein uL16x (221 aa).

It belongs to the universal ribosomal protein uL16 family. In terms of assembly, component of the small ribosomal subunit. Mature ribosomes consist of a small (40S) and a large (60S) subunit. The 40S subunit contains about 33 different proteins and 1 molecule of RNA (18S). The 60S subunit contains about 49 different proteins and 3 molecules of RNA (25S, 5.8S and 5S).

This chain is Large ribosomal subunit protein uL16x (RPL10C), found in Arabidopsis thaliana (Mouse-ear cress).